Consider the following 863-residue polypeptide: MPKKNSPLLPKETTTTQSSVDTSGSSNLTWPVSEHSIRRPLWARLLGQMLDPWLDLSIEPEHSVQYNDGRPIIYVLEDYGLCNTLILDKACRKTKLPSPLIPLPDNPLQRKRAYLALSRRSSSNSLIPNQRGGKTHSDSLANLLQAHRIRDTLDVHLVPVSIFIGRTPDRQSGWFAVLFSENWALVGRFRRLLAVLLNGRNTIVCFAPPISVRQTLNEGLPPERTLRKLQRVLRTHFRRIRETVIGPDLSTRRLLVDNVLATEAVREAIAAQAKRDGTDLSETWRKAQAYAWEIAADYSSPVIRSADFLFSHVWNRIYAGVLIHHVDSFKETAPGHEVVYVPSHRSHIDYMLLSYCLYQCGIVLPHIVAGINLNLPIVGTLLRKCGAFFIRRSIKGNMLYSIVLSEYVAQLVAGGYSLEYFIEGGRSRTGRLLQPKGGMIMMTLQAFLRQPRRPVLFQPIYIGYEKLIEGTSYLDELSGEPKKKESIWRLFWNIPKVLKQKYGQVVVNFGEPIALNDVLAELAPEWEGQALNENEKPAWLSSTVNHLARQIQTRINSAADVNPINLLALALLSTPKHAMGEADLIAQITLCKKILLELPYSNRVTVTPHTPERIIAHAEQINILTRVHHPLGDVLRVDGDNAVLLSYFRNNVLHLFTASAWVACCFKNNRRMSRIALIRLGVGMYPFLQAELFLPWTEDQFAQHIQQVIELFVREGLLLSAGNEEEDPLTRNTSQTDEVFRLRAISHSLQQAFERYYITISILVKNGPGTLSASELESLCQLAAQRLSLLYASTAPEFFDKGLFRGFIQKLRELNLVWPDTYSKLLFDERLDTSAKDAQVILGRELRHTIERISPEATKPAPK.

The tract at residues 1-29 (MPKKNSPLLPKETTTTQSSVDTSGSSNLT) is disordered. Residues 12–29 (ETTTTQSSVDTSGSSNLT) are compositionally biased toward polar residues. The HXXXXD motif signature appears at 343–348 (SHRSHI).

This sequence belongs to the GPAT/DAPAT family.

The protein localises to the cell inner membrane. The enzyme catalyses sn-glycerol 3-phosphate + an acyl-CoA = a 1-acyl-sn-glycero-3-phosphate + CoA. The protein operates within phospholipid metabolism; CDP-diacylglycerol biosynthesis; CDP-diacylglycerol from sn-glycerol 3-phosphate: step 1/3. The polypeptide is Glycerol-3-phosphate acyltransferase (Xylella fastidiosa (strain M12)).